The primary structure comprises 212 residues: Transcriptional regulator GfcR (212 aa).

The disordered stretch occupies residues 38–60; the sequence is LVERSGTGTEPDTSDDGGPHDIH.

It belongs to the purine/pyrimidine phosphoribosyltransferase family. GfcR subfamily.

Functionally, DNA-binding transcriptional regulator that functions as a regulator of central sugar catabolic pathways. The sequence is that of Transcriptional regulator GfcR from Haloarcula marismortui (strain ATCC 43049 / DSM 3752 / JCM 8966 / VKM B-1809) (Halobacterium marismortui).